The sequence spans 152 residues: Transcriptional repressor NrdR (152 aa).

The segment at 3 to 33 is a zinc-finger region; it reads CSICKKGETSVVDSRPTEDGTAIRRRRLCVC. Positions 48-138 constitute an ATP-cone domain; sequence IMVVKKNGRK…VYRNFREEKD (91 aa).

This sequence belongs to the NrdR family. Zn(2+) serves as cofactor.

In terms of biological role, negatively regulates transcription of bacterial ribonucleotide reductase nrd genes and operons by binding to NrdR-boxes. The protein is Transcriptional repressor NrdR of Pelagibacter ubique (strain HTCC1062).